Here is a 339-residue protein sequence, read N- to C-terminus: Anthranilate phosphoribosyltransferase (339 aa).

Residues Gly81, 84–85 (GD), Thr89, 91–94 (NIST), 109–117 (KHGNRNLSS), and Ala121 each bind 5-phospho-alpha-D-ribose 1-diphosphate. Residue Gly81 participates in anthranilate binding. Residue Ser93 participates in Mg(2+) binding. Asn112 contributes to the anthranilate binding site. Arg167 is a binding site for anthranilate. Residues Asp226 and Glu227 each coordinate Mg(2+).

It belongs to the anthranilate phosphoribosyltransferase family. As to quaternary structure, homodimer. The cofactor is Mg(2+).

It carries out the reaction N-(5-phospho-beta-D-ribosyl)anthranilate + diphosphate = 5-phospho-alpha-D-ribose 1-diphosphate + anthranilate. It participates in amino-acid biosynthesis; L-tryptophan biosynthesis; L-tryptophan from chorismate: step 2/5. Functionally, catalyzes the transfer of the phosphoribosyl group of 5-phosphorylribose-1-pyrophosphate (PRPP) to anthranilate to yield N-(5'-phosphoribosyl)-anthranilate (PRA). The protein is Anthranilate phosphoribosyltransferase of Roseobacter denitrificans (strain ATCC 33942 / OCh 114) (Erythrobacter sp. (strain OCh 114)).